A 315-amino-acid chain; its full sequence is Methionyl-tRNA formyltransferase (315 aa).

113-116 provides a ligand contact to (6S)-5,6,7,8-tetrahydrofolate; it reads SLLP.

This sequence belongs to the Fmt family.

It catalyses the reaction L-methionyl-tRNA(fMet) + (6R)-10-formyltetrahydrofolate = N-formyl-L-methionyl-tRNA(fMet) + (6S)-5,6,7,8-tetrahydrofolate + H(+). Functionally, attaches a formyl group to the free amino group of methionyl-tRNA(fMet). The formyl group appears to play a dual role in the initiator identity of N-formylmethionyl-tRNA by promoting its recognition by IF2 and preventing the misappropriation of this tRNA by the elongation apparatus. This Shigella boydii serotype 4 (strain Sb227) protein is Methionyl-tRNA formyltransferase.